The primary structure comprises 123 residues: uncharacterized protein (123 aa).

The chain crosses the membrane as a helical span at residues 14 to 34 (VVLKITAVVCSVFSIRVLILA).

The protein resides in the membrane. This is an uncharacterized protein from Saccharomyces cerevisiae (strain ATCC 204508 / S288c) (Baker's yeast).